Reading from the N-terminus, the 392-residue chain is Sex-determining region Y protein (392 aa).

Residues 4–81 (HVKRPMNAFM…YKYQPHRRAK (78 aa)) are sufficient for interaction with KPNB1. Residues 5–73 (VKRPMNAFMV…LHREKYPNYK (69 aa)) constitute a DNA-binding region (HMG box). Required for nuclear localization stretches follow at residues 6 to 22 (KRPM…ERHK) and 75 to 81 (QPHRRAK). Residues 52 to 84 (RPFFQEAQRLKILHREKYPNYKYQPHRRAKVSQ) are sufficient for interaction with EP300. The residue at position 81 (Lys81) is an N6-acetyllysine. The interval 92–144 (AVASTKLYNLLQWDRNPHAITYRQDWSRAAHLYSKNQQSFYWQPVDIPTGHLQ) is necessary for interaction with ZNF208 isoform KRAB-O. A necessary for interaction with SLC9A3R2 and nuclear accumulation of SLC9A3R2 region spans residues 94–138 (ASTKLYNLLQWDRNPHAITYRQDWSRAAHLYSKNQQSFYWQPVDI). The disordered stretch occupies residues 142 to 361 (HLQQQQQQQQ…QQQQQQQQQQ (220 aa)). Residues 144-181 (QQQQQQQQQQQFHNHHQQQQQFYDHHQQQQQQQQQQQQ) are compositionally biased toward low complexity. 2 stretches are compositionally biased toward basic and acidic residues: residues 182–197 (FHDH…DHHQ) and 210–228 (QEQQ…HDHQ). The span at 229-238 (QQQQQQQQQQ) shows a compositional bias: low complexity. 3 stretches are compositionally biased toward basic and acidic residues: residues 239–250 (FHDHHQQKQQFH), 261–295 (FHDH…HDHP), and 313–349 (QFHD…DHHQ). The segment covering 350–361 (QQQQQQQQQQQQ) has biased composition (low complexity).

Belongs to the SRY family. As to quaternary structure, interacts with KPNB1, ZNF208 isoform KRAB-O, PARP1 and SLC9A3R2. The interaction with KPNB1 is sensitive to dissociation by Ran in the GTP-bound form. Interaction with PARP1 impaired its DNA-binding activity. Interacts with CALM, EP300, HDAC3 and WT1. The interaction with EP300 modulates its DNA-binding activity. Post-translationally, degraded due to the presence of a degron at the C-terminus that promotes its degradation. Phosphorylated on serine residues by PKA. Phosphorylation by PKA enhances its DNA-binding activity and stimulates transcription repression. In terms of processing, acetylation of Lys-81 contributes to its nuclear localization and enhances its interaction with KPNB1. Post-translationally, poly-ADP-ribosylated by PARP1. ADP-ribosylation reduces its DNA-binding activity. As to expression, expressed in gonadal somatic pre-Sertoli cells. Expressed in the substantia nigra of the brain (at protein level). Expressed in diencephalon, cortex, the substantia nigra of the midbrain and the medial mammillary bodies of the hypothalamus of male, but not female. In terms of tissue distribution, expressed in gonadal somatic pre-Sertoli cells. While it is expressed at lower level compared to isoform Sry-S, this form is more stable and constitutes the predominant protein product of the Sry locus in XY gonads (at protein level).

The protein localises to the nucleus speckle. It localises to the cytoplasm. Its subcellular location is the nucleus. Functionally, transcriptional regulator that controls a genetic switch in male development. It is necessary and sufficient for initiating male sex determination by directing the development of supporting cell precursors (pre-Sertoli cells) as Sertoli rather than granulosa cells. Involved in different aspects of gene regulation including promoter activation or repression. Binds to the DNA consensus sequence 5'-[AT]AACAA[AT]-3'. SRY HMG box recognizes DNA by partial intercalation in the minor groove and promotes DNA bending. Also involved in pre-mRNA splicing. In male adult brain involved in the maintenance of motor functions of dopaminergic neurons. Its function is as follows. Constitutes the major isoform, which is necessary and sufficient for initiating male sex determination. In terms of biological role, constitutes a minor isoform, which is unstable due to the presence of a degron at the C-terminus that promotes its degradation. Not necessary and sufficient for initiating male sex determination. This chain is Sex-determining region Y protein, found in Mus musculus (Mouse).